Consider the following 426-residue polypeptide: Serine--tRNA ligase (426 aa).

Position 231 to 233 (231 to 233 (TSE)) interacts with L-serine. Position 262–264 (262–264 (RSE)) interacts with ATP. An L-serine-binding site is contributed by Glu-285. 349–352 (EISS) is a binding site for ATP. Position 385 (Ser-385) interacts with L-serine.

The protein belongs to the class-II aminoacyl-tRNA synthetase family. Type-1 seryl-tRNA synthetase subfamily. Homodimer. The tRNA molecule binds across the dimer.

The protein localises to the cytoplasm. It catalyses the reaction tRNA(Ser) + L-serine + ATP = L-seryl-tRNA(Ser) + AMP + diphosphate + H(+). The enzyme catalyses tRNA(Sec) + L-serine + ATP = L-seryl-tRNA(Sec) + AMP + diphosphate + H(+). It functions in the pathway aminoacyl-tRNA biosynthesis; selenocysteinyl-tRNA(Sec) biosynthesis; L-seryl-tRNA(Sec) from L-serine and tRNA(Sec): step 1/1. Functionally, catalyzes the attachment of serine to tRNA(Ser). Is also able to aminoacylate tRNA(Sec) with serine, to form the misacylated tRNA L-seryl-tRNA(Sec), which will be further converted into selenocysteinyl-tRNA(Sec). In Legionella pneumophila (strain Paris), this protein is Serine--tRNA ligase.